A 647-amino-acid chain; its full sequence is Chaperone protein DnaK (647 aa).

At threonine 199 the chain carries Phosphothreonine; by autocatalysis. Positions 602 to 647 (MYAQEQAQAGQQAGPGAGSASAGQSGEKPVEGEVVDAEFEEVKDKK) are disordered. Residues 604-627 (AQEQAQAGQQAGPGAGSASAGQSG) show a composition bias toward low complexity.

The protein belongs to the heat shock protein 70 family.

Acts as a chaperone. The sequence is that of Chaperone protein DnaK from Nitrosomonas eutropha (strain DSM 101675 / C91 / Nm57).